Reading from the N-terminus, the 226-residue chain is Small ribosomal subunit protein uS5 (226 aa).

The disordered stretch occupies residues 1-71; that stretch reads MEDIKHNKKP…RKNEKRTKSE (71 aa). Low complexity predominate over residues 24–54; sequence ANPQANHANPNNRSASVNNNSVNNNKKNSSR. The 64-residue stretch at 72–135 folds into the S5 DRBM domain; the sequence is FEEKIVKISR…KMAENNVQKI (64 aa).

Belongs to the universal ribosomal protein uS5 family. Part of the 30S ribosomal subunit. Contacts proteins S4 and S8.

In terms of biological role, with S4 and S12 plays an important role in translational accuracy. Its function is as follows. Located at the back of the 30S subunit body where it stabilizes the conformation of the head with respect to the body. The sequence is that of Small ribosomal subunit protein uS5 from Mycoplasmoides gallisepticum (strain R(low / passage 15 / clone 2)) (Mycoplasma gallisepticum).